The primary structure comprises 452 residues: 23S rRNA (uracil(1939)-C(5))-methyltransferase RlmD (452 aa).

The interval 1–23 (MSRKKSNGGLRFQPAGGNRATQI) is disordered. The TRAM domain maps to 22–80 (QIPVGKKQRLLIERVAGDGRGIAFIEGRTWFVSGALGGEEVEARVLGARGKVVEARLER). Residues cysteine 93, cysteine 99, cysteine 102, and cysteine 181 each contribute to the [4Fe-4S] cluster site. Residues glutamine 285, phenylalanine 314, asparagine 319, glutamate 335, aspartate 362, and aspartate 383 each coordinate S-adenosyl-L-methionine. The active-site Nucleophile is cysteine 409.

The protein belongs to the class I-like SAM-binding methyltransferase superfamily. RNA M5U methyltransferase family. RlmD subfamily.

It catalyses the reaction uridine(1939) in 23S rRNA + S-adenosyl-L-methionine = 5-methyluridine(1939) in 23S rRNA + S-adenosyl-L-homocysteine + H(+). Its function is as follows. Catalyzes the formation of 5-methyl-uridine at position 1939 (m5U1939) in 23S rRNA. The protein is 23S rRNA (uracil(1939)-C(5))-methyltransferase RlmD of Pseudomonas entomophila (strain L48).